The following is a 40-amino-acid chain: Photosystem II reaction center protein J (40 aa).

A helical transmembrane segment spans residues 8 to 28; that stretch reads IPLWIIGTVAGILVIGLVGVF.

This sequence belongs to the PsbJ family. PSII is composed of 1 copy each of membrane proteins PsbA, PsbB, PsbC, PsbD, PsbE, PsbF, PsbH, PsbI, PsbJ, PsbK, PsbL, PsbM, PsbT, PsbX, PsbY, PsbZ, Psb30/Ycf12, at least 3 peripheral proteins of the oxygen-evolving complex and a large number of cofactors. It forms dimeric complexes.

The protein localises to the plastid. It localises to the chloroplast thylakoid membrane. Its function is as follows. One of the components of the core complex of photosystem II (PSII). PSII is a light-driven water:plastoquinone oxidoreductase that uses light energy to abstract electrons from H(2)O, generating O(2) and a proton gradient subsequently used for ATP formation. It consists of a core antenna complex that captures photons, and an electron transfer chain that converts photonic excitation into a charge separation. The polypeptide is Photosystem II reaction center protein J (Helianthus annuus (Common sunflower)).